A 748-amino-acid chain; its full sequence is Photosystem I P700 chlorophyll a apoprotein A1 (748 aa).

The next 8 membrane-spanning stretches (helical) occupy residues 69 to 92, 155 to 178, 194 to 218, 290 to 308, 345 to 368, 384 to 410, 432 to 454, and 529 to 547; these read IFSA…FHGA, LYVT…FHYH, LNHH…HVSL, VAHH…GHMY, WHAN…HHMY, LSLF…IYMV, AIIS…LYIH, and FMVH…LILL. Cys571 and Cys580 together coordinate [4Fe-4S] cluster. A run of 2 helical transmembrane segments spans residues 587–608 and 662–684; these read HVFL…HFSW and LSAY…MFLF. Position 673 (His673) interacts with chlorophyll a'. Met681 and Tyr689 together coordinate chlorophyll a. Trp690 is a binding site for phylloquinone. A helical transmembrane segment spans residues 722–742; the sequence is AVGVAHYLLGGIATTWAFFLA.

It belongs to the PsaA/PsaB family. As to quaternary structure, the PsaA/B heterodimer binds the P700 chlorophyll special pair and subsequent electron acceptors. PSI consists of a core antenna complex that captures photons, and an electron transfer chain that converts photonic excitation into a charge separation. The eukaryotic PSI reaction center is composed of at least 11 subunits. Requires P700 is a chlorophyll a/chlorophyll a' dimer, A0 is one or more chlorophyll a, A1 is one or both phylloquinones and FX is a shared 4Fe-4S iron-sulfur center. as cofactor.

The protein localises to the plastid. It localises to the chloroplast thylakoid membrane. The enzyme catalyses reduced [plastocyanin] + hnu + oxidized [2Fe-2S]-[ferredoxin] = oxidized [plastocyanin] + reduced [2Fe-2S]-[ferredoxin]. Its function is as follows. PsaA and PsaB bind P700, the primary electron donor of photosystem I (PSI), as well as the electron acceptors A0, A1 and FX. PSI is a plastocyanin/cytochrome c6-ferredoxin oxidoreductase, converting photonic excitation into a charge separation, which transfers an electron from the donor P700 chlorophyll pair to the spectroscopically characterized acceptors A0, A1, FX, FA and FB in turn. Oxidized P700 is reduced on the lumenal side of the thylakoid membrane by plastocyanin or cytochrome c6. The polypeptide is Photosystem I P700 chlorophyll a apoprotein A1 (Cyanidioschyzon merolae (strain NIES-3377 / 10D) (Unicellular red alga)).